Here is a 305-residue protein sequence, read N- to C-terminus: Type II restriction enzyme SsoII (305 aa).

The enzyme catalyses Endonucleolytic cleavage of DNA to give specific double-stranded fragments with terminal 5'-phosphates.. Functionally, a P subtype restriction enzyme that recognizes the double-stranded sequence 5'-CCNGG-3' and cleaves before C-1. This is Type II restriction enzyme SsoII (ssoIIR) from Shigella sonnei.